The following is a 475-amino-acid chain: Glycogen synthase (475 aa).

Lys-15 contributes to the ADP-alpha-D-glucose binding site.

It belongs to the glycosyltransferase 1 family. Bacterial/plant glycogen synthase subfamily.

The catalysed reaction is [(1-&gt;4)-alpha-D-glucosyl](n) + ADP-alpha-D-glucose = [(1-&gt;4)-alpha-D-glucosyl](n+1) + ADP + H(+). It participates in glycan biosynthesis; glycogen biosynthesis. In terms of biological role, synthesizes alpha-1,4-glucan chains using ADP-glucose. The sequence is that of Glycogen synthase from Anaeromyxobacter dehalogenans (strain 2CP-C).